A 107-amino-acid chain; its full sequence is MASVRTMNDYHKRIEAADDKLIVLDFYATWCGPCKEMESTVKSLARKYSSKAVVLKIDVDKFEELTERYKVRSMPTFVFLRQNRRLASFAGADEHKLTNMMAKLVKA.

In terms of domain architecture, Thioredoxin spans 2 to 106; sequence ASVRTMNDYH…LTNMMAKLVK (105 aa). Active-site nucleophile residues include Cys-31 and Cys-34. Cysteines 31 and 34 form a disulfide.

It belongs to the thioredoxin family. Ovary specific. Expressed present in the nurse cells from stage 9 of ovary development and is transported into the oocyte. Expressed throughout oogenesis.

Its subcellular location is the nucleus. In terms of biological role, participates in various redox reactions through the reversible oxidation of its active center dithiol to a disulfide and catalyzes dithiol-disulfide exchange reactions. As a reducing substrate of peroxiredoxin 1, thioredoxin 2 is preferred over thioredoxin 1. Required for female meiosis and early embryonic development. The polypeptide is Thioredoxin-1 (dhd) (Drosophila melanogaster (Fruit fly)).